Here is a 112-residue protein sequence, read N- to C-terminus: uncharacterized protein (112 aa).

Ser-51 and Ser-53 each carry phosphoserine. A helical transmembrane segment spans residues 90-110; sequence FIFTLSMFLIAFILLIAFVSF.

It localises to the golgi apparatus membrane. The protein resides in the endoplasmic reticulum membrane. This is an uncharacterized protein from Schizosaccharomyces pombe (strain 972 / ATCC 24843) (Fission yeast).